Reading from the N-terminus, the 430-residue chain is Gustatory receptor-like 43a (430 aa).

The Cytoplasmic portion of the chain corresponds to 1-31 (MSTGSHSPEAMWSATNFRRHQRKPNQVLHRW). A helical transmembrane segment spans residues 32 to 52 (FFKGSAWIIYAIACGLHFFKL). The Extracellular portion of the chain corresponds to 53 to 79 (HYNERTNQVEESQYHRIWSKIVVVLKV). The chain crosses the membrane as a helical span at residues 80–100 (ILLASPYLQYFVLGLGIYIHI). Topologically, residues 101–110 (TLVQDSKAQN) are cytoplasmic. Residues 111–131 (FLMSLIVLGIVIGVLRRLLIF) traverse the membrane as a helical segment. Topologically, residues 132–168 (LHLKRDRRFLKHTVNEILHITSALEQKFGMEYKCDST) are extracellular. Residues 169–189 (LLVVYLAKLWILTVMLDSLWY) form a helical membrane-spanning segment. Topologically, residues 190–277 (KPYFLSSIFL…RDNVSWLSTS (88 aa)) are cytoplasmic. A helical membrane pass occupies residues 278–298 (VYLMIFTCIFNAELLIECSLF). At 299 to 306 (AGDELENK) the chain is on the extracellular side. The chain crosses the membrane as a helical span at residues 307-327 (IYIITDGCLGPVCVPILYVLI). At 328-396 (LGMCTDRFRD…IILDITCDRE (69 aa)) the chain is on the cytoplasmic side. The chain crosses the membrane as a helical span at residues 397–417 (FVMDYIVTVILTALSLVQYTI). Topologically, residues 418–430 (STGGNISECVTHK) are extracellular. Asn422 is a glycosylation site (N-linked (GlcNAc...) asparagine).

It localises to the cell membrane. The sequence is that of Gustatory receptor-like 43a from Drosophila melanogaster (Fruit fly).